We begin with the raw amino-acid sequence, 226 residues long: MKLCVALDLSTKEECLQLAKELKNLDIWLKVGLRAYLRDGFKFIEELKKVDDFKIFLDLKIHDIPNTMADACEEISKLGVDMINIHASAGKIAMQEVMTRLSKFSKRPLVLAVSALTSFDEENFFSIYRQKIEEAVINFSKISYENGLDGMVCSVFESKIIKEHTQRNFLTLTPGIRPFGEKNDDQKRVANLTMARENLSDFIVVGRPIYKDNNPRKICEKILQEI.

Residues Asp8, Lys30, 58 to 67 (DLKIHDIPNT), Thr117, Arg177, Gln186, Gly206, and Arg207 contribute to the substrate site. Lys60 acts as the Proton donor in catalysis.

This sequence belongs to the OMP decarboxylase family. Type 1 subfamily. Homodimer.

It carries out the reaction orotidine 5'-phosphate + H(+) = UMP + CO2. The protein operates within pyrimidine metabolism; UMP biosynthesis via de novo pathway; UMP from orotate: step 2/2. Its function is as follows. Catalyzes the decarboxylation of orotidine 5'-monophosphate (OMP) to uridine 5'-monophosphate (UMP). In Campylobacter jejuni subsp. jejuni serotype O:6 (strain 81116 / NCTC 11828), this protein is Orotidine 5'-phosphate decarboxylase.